The chain runs to 130 residues: Small ribosomal subunit protein uS9 (130 aa).

It belongs to the universal ribosomal protein uS9 family.

The polypeptide is Small ribosomal subunit protein uS9 (Azotobacter vinelandii (strain DJ / ATCC BAA-1303)).